Consider the following 247-residue polypeptide: Myeloid leukemia factor 2 (247 aa).

The disordered stretch occupies residues 122–247 (ETSEMRSAPG…PSRQSRRYDW (126 aa)). Over residues 134 to 144 (RETRRTVRDSD) the composition is skewed to basic and acidic residues. Over residues 154–169 (HHIRDRAHILQRSRNH) the composition is skewed to basic residues. Positions 170–179 (RTGDQEERQD) are enriched in basic and acidic residues. The span at 182–192 (NLDESEAAAFD) shows a compositional bias: acidic residues. The segment covering 193–225 (DEWRRETSRYRQQRPLEFRRHEASVGGGRRAEG) has biased composition (basic and acidic residues). A phosphoserine mark is found at serine 216, serine 237, and serine 239.

Belongs to the MLF family.

Its subcellular location is the cytoplasm. The protein resides in the nucleus. In Mus musculus (Mouse), this protein is Myeloid leukemia factor 2 (Mlf2).